Here is a 287-residue protein sequence, read N- to C-terminus: Pentatricopeptide repeat-containing protein At4g18975, chloroplastic (287 aa).

A chloroplast-targeting transit peptide spans 1-34 (MALCNLNPTQGIFPLQGLSKSQEFICFSLLQSPR). 2 PPR repeats span residues 165–199 (TMGT…HTRS) and 201–235 (PRRL…KVSP).

It belongs to the PPR family. P subfamily.

The protein resides in the plastid. It is found in the chloroplast. The polypeptide is Pentatricopeptide repeat-containing protein At4g18975, chloroplastic (Arabidopsis thaliana (Mouse-ear cress)).